The chain runs to 297 residues: Nucleotide-binding protein DSY4845 (297 aa).

Residue 13–20 (GLSGAGKT) coordinates ATP. Residue 64-67 (DLRG) participates in GTP binding.

Belongs to the RapZ-like family.

Its function is as follows. Displays ATPase and GTPase activities. This Desulfitobacterium hafniense (strain Y51) protein is Nucleotide-binding protein DSY4845.